The chain runs to 123 residues: Small ribosomal subunit protein uS12 (123 aa).

Positions methionine 1–glutamine 25 are disordered. Residues isoleucine 8–serine 21 are compositionally biased toward basic residues. Aspartate 89 is modified (3-methylthioaspartic acid).

The protein belongs to the universal ribosomal protein uS12 family. Part of the 30S ribosomal subunit. Contacts proteins S8 and S17. May interact with IF1 in the 30S initiation complex.

With S4 and S5 plays an important role in translational accuracy. In terms of biological role, interacts with and stabilizes bases of the 16S rRNA that are involved in tRNA selection in the A site and with the mRNA backbone. Located at the interface of the 30S and 50S subunits, it traverses the body of the 30S subunit contacting proteins on the other side and probably holding the rRNA structure together. The combined cluster of proteins S8, S12 and S17 appears to hold together the shoulder and platform of the 30S subunit. The polypeptide is Small ribosomal subunit protein uS12 (Chlamydia pneumoniae (Chlamydophila pneumoniae)).